Here is a 271-residue protein sequence, read N- to C-terminus: Zinc finger CCHC domain-containing protein 9 (271 aa).

A disordered region spans residues 1-40 (MTRWARVSTTYNKRPLPATSWEDMKKGSFEGTSQNLPKRK). S48 carries the post-translational modification Phosphoserine. 4 CCHC-type zinc fingers span residues 128–145 (MVCFHCRKPGHGIADCPA), 155–172 (GICYRCGSTEHEITKCKA), 184–201 (AKCFVCGEMGHLSRSCPD), and 211–228 (GGCKLCGSVEHLKKDCPE).

Its subcellular location is the nucleus. The protein localises to the nucleolus. Its function is as follows. May down-regulate transcription mediated by NF-kappa-B and the serum response element. In Homo sapiens (Human), this protein is Zinc finger CCHC domain-containing protein 9 (ZCCHC9).